The chain runs to 180 residues: Large ribosomal subunit protein uL6 (180 aa).

It belongs to the universal ribosomal protein uL6 family. In terms of assembly, part of the 50S ribosomal subunit.

Its function is as follows. This protein binds to the 23S rRNA, and is important in its secondary structure. It is located near the subunit interface in the base of the L7/L12 stalk, and near the tRNA binding site of the peptidyltransferase center. The protein is Large ribosomal subunit protein uL6 of Cutibacterium acnes (strain DSM 16379 / KPA171202) (Propionibacterium acnes).